The primary structure comprises 251 residues: MGRGRVELKRIENKINRQVTFAKRRNGLLKKAYELSVLCDAEVALIIFSNRGKLYEFCSSSNMLKTLDRYQKCSYGSIEVNNKPAKELENSYREYLKLKGRYENLQRQQRNLLGEDLGPLNSKELEQLERQLDGSLKQVRSIKTQYMLDQLSDLQNKEQMLLETNRALAMKLDDMIGVRSHHMGGGGGWEGGEQNVTYAHHQAQSQGLYQPLECNPTLQMGYDNPVCSEQITATTQAQAQQGNGYIPGWML.

The MADS-box domain maps to 3-57 (RGRVELKRIENKINRQVTFAKRRNGLLKKAYELSVLCDAEVALIIFSNRGKLYEF). Positions 85 to 176 (AKELENSYRE…ALAMKLDDMI (92 aa)) form a coiled coil. A K-box domain is found at 88-178 (LENSYREYLK…AMKLDDMIGV (91 aa)).

In terms of assembly, heterodimer with AGAMOUS capable of binding to CArG-box sequences. Interacts with AGL16. Interacts with TT16/AGL32. As to expression, expressed mainly in carpels, and weakly in stamens.

Its subcellular location is the nucleus. Its function is as follows. Probable transcription factor. Functions with SEPALLATA2/AGL4 and SEPALLATA3/AGL9 to ensure proper development of petals, stamens and carpels, and to prevent the indeterminate growth of the flower meristem. Forms a heterodimer via the K-box domain with AGAMOUS, that could be involved in genes regulation during floral meristem development. This chain is Developmental protein SEPALLATA 1 (SEP1), found in Arabidopsis thaliana (Mouse-ear cress).